The chain runs to 65 residues: Ferredoxin-like protein in vnf region (65 aa).

4Fe-4S ferredoxin-type domains lie at Ala2–Asp30 and Tyr32–Asp65. The [4Fe-4S] cluster site is built by Cys10, Cys13, Cys16, Cys20, Cys39, Cys42, Cys50, and Cys54.

[4Fe-4S] cluster is required as a cofactor.

This chain is Ferredoxin-like protein in vnf region, found in Azotobacter vinelandii.